The chain runs to 306 residues: MSNWLVDKLIPSIMRSEVKKSSVPEGLWHKCPSCDAVLYRPELEKTLDVCPKCNHHMRIGARARLNIFLDVDGREELGVDLEPVDRLKFRDGKKYKDRLTAAQKQTGEKDALISMSGTLLGMPVVASAFEFSFMGGSMGAIVGERFVRAANYALENRCPMICFAASGGARMQEALISLMQMAKTSAVLARLREEGLPFISVLTDPVYGGVSASLAMLGDVIVAEPKALIGFAGPRVIEQTVREKLPEGFQRSEFLLDHGAIDMIIARSELRPRLGNLLAQMMNLPTPRFVAPVIEPIIVPPAPATI.

The 270-residue stretch at 27–296 folds into the CoA carboxyltransferase N-terminal domain; sequence LWHKCPSCDA…PRFVAPVIEP (270 aa). The Zn(2+) site is built by C31, C34, C50, and C53. The C4-type zinc-finger motif lies at 31 to 53; sequence CPSCDAVLYRPELEKTLDVCPKC.

The protein belongs to the AccD/PCCB family. Acetyl-CoA carboxylase is a heterohexamer composed of biotin carboxyl carrier protein (AccB), biotin carboxylase (AccC) and two subunits each of ACCase subunit alpha (AccA) and ACCase subunit beta (AccD). Zn(2+) serves as cofactor.

Its subcellular location is the cytoplasm. It carries out the reaction N(6)-carboxybiotinyl-L-lysyl-[protein] + acetyl-CoA = N(6)-biotinyl-L-lysyl-[protein] + malonyl-CoA. The protein operates within lipid metabolism; malonyl-CoA biosynthesis; malonyl-CoA from acetyl-CoA: step 1/1. Functionally, component of the acetyl coenzyme A carboxylase (ACC) complex. Biotin carboxylase (BC) catalyzes the carboxylation of biotin on its carrier protein (BCCP) and then the CO(2) group is transferred by the transcarboxylase to acetyl-CoA to form malonyl-CoA. In Pseudomonas syringae pv. tomato (strain ATCC BAA-871 / DC3000), this protein is Acetyl-coenzyme A carboxylase carboxyl transferase subunit beta.